A 673-amino-acid chain; its full sequence is DNA ligase (673 aa).

NAD(+) is bound by residues 33 to 37 (DAEYD), 82 to 83 (SL), and Glu114. Catalysis depends on Lys116, which acts as the N6-AMP-lysine intermediate. 4 residues coordinate NAD(+): Arg137, Glu174, Lys291, and Lys315. Positions 409, 412, 427, and 433 each coordinate Zn(2+). In terms of domain architecture, BRCT spans 592-673 (AQEQPLAGLV…LINLLEQHNG (82 aa)).

It belongs to the NAD-dependent DNA ligase family. LigA subfamily. Requires Mg(2+) as cofactor. Mn(2+) serves as cofactor.

The catalysed reaction is NAD(+) + (deoxyribonucleotide)n-3'-hydroxyl + 5'-phospho-(deoxyribonucleotide)m = (deoxyribonucleotide)n+m + AMP + beta-nicotinamide D-nucleotide.. Its function is as follows. DNA ligase that catalyzes the formation of phosphodiester linkages between 5'-phosphoryl and 3'-hydroxyl groups in double-stranded DNA using NAD as a coenzyme and as the energy source for the reaction. It is essential for DNA replication and repair of damaged DNA. This Pseudoalteromonas translucida (strain TAC 125) protein is DNA ligase.